The sequence spans 645 residues: MLGDRVRATRYFAYSGEVAIAALVVAVIGLMILPLPTPMIDTLLGINITLSVVLLMVTMYVPDSISLSSFPSLLLFTTLLRLSLNIASTKSILLHAEAGHIIESFGELVVGGNLVVGLVVFLIITTVQFIVIAKGSERVAEVGARFTLDAMPGKQMSIDADLRGGNLTADEARRKRARLAMESQLHGGMDGAMKFVKGDAIAGLVITMVNILAGIVVGVTYHGMTAGDAANRFAILSVGDAMVSQIASLLISVAAGVMITRVANENETRLSSLGLDIGRQLTSNARALMAASVLLACFAFVPGFPAVLFLLLAAAVGAGGYTIWRKQRDISGTDQRKLPSASRKGAKGEAPHIRKNAPDFASPLSMRLSPQLAALLDPARLDQAIESERRQLVELLGLPFPGIAIWQTESLQGMQYEVLIHDVPETRAELENTDDMQAALARQAISPLHARAHLFVGIQETQWMLEQVAVDYPGLVAEVNKAMPAQRIADVLRRLLEERIPVRNIKSILESLVVWGPKEKDLLMLTEYVRCDLGRYLAHTATAGTGQLPAVMLDHAVEQLIRQSIRATAAGNFLALPPEQANQLVEQVERIVGDHAQHPLAVVASMDVRRYVRRMIEARLTWLQVYSFQELGSEVQLQPIGRVVV.

A run of 7 helical transmembrane segments spans residues 18–34 (VAIA…MILP), 43–59 (LLGI…MVTM), 108–124 (LVVG…FLII), 201–217 (IAGL…GIVV), 243–259 (VSQI…GVMI), 285–301 (ARAL…FAFV), and 308–324 (LFLL…YTIW). The interval 334 to 354 (DQRKLPSASRKGAKGEAPHIR) is disordered.

This sequence belongs to the FHIPEP (flagella/HR/invasion proteins export pore) family.

The protein localises to the cell inner membrane. Its function is as follows. Involved in the secretion of a proteinaceous elicitor of the hypersensitivity response in plants. In Xanthomonas euvesicatoria, this protein is Protein hrpC2 (hrpC2).